We begin with the raw amino-acid sequence, 282 residues long: uncharacterized protein (282 aa).

The 77-residue stretch at threonine 2–glutamine 78 folds into the HTH rpiR-type domain. Residues valine 38–arginine 57 constitute a DNA-binding region (H-T-H motif). The SIS domain occupies alanine 122 to asparagine 262.

This is an uncharacterized protein from Caldanaerobacter subterraneus subsp. tengcongensis (strain DSM 15242 / JCM 11007 / NBRC 100824 / MB4) (Thermoanaerobacter tengcongensis).